A 120-amino-acid polypeptide reads, in one-letter code: Phosphoribosyl-AMP cyclohydrolase (120 aa).

Asp-75 serves as a coordination point for Mg(2+). Cys-76 contacts Zn(2+). Residues Asp-77 and Asp-79 each coordinate Mg(2+). Residues Cys-92 and Cys-99 each coordinate Zn(2+).

The protein belongs to the PRA-CH family. Homodimer. Requires Mg(2+) as cofactor. Zn(2+) serves as cofactor.

It is found in the cytoplasm. The catalysed reaction is 1-(5-phospho-beta-D-ribosyl)-5'-AMP + H2O = 1-(5-phospho-beta-D-ribosyl)-5-[(5-phospho-beta-D-ribosylamino)methylideneamino]imidazole-4-carboxamide. Its pathway is amino-acid biosynthesis; L-histidine biosynthesis; L-histidine from 5-phospho-alpha-D-ribose 1-diphosphate: step 3/9. In terms of biological role, catalyzes the hydrolysis of the adenine ring of phosphoribosyl-AMP. This Methanosarcina mazei (strain ATCC BAA-159 / DSM 3647 / Goe1 / Go1 / JCM 11833 / OCM 88) (Methanosarcina frisia) protein is Phosphoribosyl-AMP cyclohydrolase.